The sequence spans 275 residues: 3-methyl-2-oxobutanoate hydroxymethyltransferase (275 aa).

Positions 44 and 83 each coordinate Mg(2+). 3-methyl-2-oxobutanoate is bound by residues 44–45 (DS), aspartate 83, and lysine 113. Glutamate 115 lines the Mg(2+) pocket. Residue glutamate 182 is the Proton acceptor of the active site.

Belongs to the PanB family. Homodecamer; pentamer of dimers. Mg(2+) serves as cofactor.

The protein localises to the cytoplasm. The enzyme catalyses 3-methyl-2-oxobutanoate + (6R)-5,10-methylene-5,6,7,8-tetrahydrofolate + H2O = 2-dehydropantoate + (6S)-5,6,7,8-tetrahydrofolate. It participates in cofactor biosynthesis; (R)-pantothenate biosynthesis; (R)-pantoate from 3-methyl-2-oxobutanoate: step 1/2. Catalyzes the reversible reaction in which hydroxymethyl group from 5,10-methylenetetrahydrofolate is transferred onto alpha-ketoisovalerate to form ketopantoate. In Enterococcus faecalis (strain ATCC 700802 / V583), this protein is 3-methyl-2-oxobutanoate hydroxymethyltransferase.